Here is a 313-residue protein sequence, read N- to C-terminus: Type II restriction enzyme BsuMI component YdiR (313 aa).

A disordered region spans residues 289–313 (FVSGDIVDENATTSSDDLPEDFENN).

As to quaternary structure, bsuMI restriction activity requires YdiR, YdiS and YdjA.

The catalysed reaction is Endonucleolytic cleavage of DNA to give specific double-stranded fragments with terminal 5'-phosphates.. Functionally, a P subtype restriction enzyme that recognizes the double-stranded sequence 5'-CTCGAG-3'; the cleavage site is unknown. In Bacillus subtilis (strain 168), this protein is Type II restriction enzyme BsuMI component YdiR (ydiR).